Consider the following 68-residue polypeptide: Small ribosomal subunit protein bS21 (68 aa).

Belongs to the bacterial ribosomal protein bS21 family.

The chain is Small ribosomal subunit protein bS21 from Ruegeria pomeroyi (strain ATCC 700808 / DSM 15171 / DSS-3) (Silicibacter pomeroyi).